Reading from the N-terminus, the 532-residue chain is Variant surface glycoprotein ILTAT 1.23 (532 aa).

The signal sequence occupies residues Met1–Ala23. Residue Asn66 is glycosylated (N-linked (GlcNAc...) asparagine). Disordered stretches follow at residues Ala79–Ala107 and Met408–Lys504. Asn419 is a glycosylation site (N-linked (GlcNAc...) asparagine). Over residues Cys427–Lys445 the composition is skewed to basic and acidic residues. Residues Gly450–Ala470 show a composition bias toward low complexity. 2 stretches are compositionally biased toward basic and acidic residues: residues His472–Gly484 and Lys494–Lys504. A glycan (N-linked (GlcNAc...) asparagine) is linked at Asn509. Asn509 carries GPI-anchor amidated asparagine lipidation. Positions Gly510 to Phe532 are cleaved as a propeptide — removed in mature form.

The protein resides in the cell membrane. In terms of biological role, VSG forms a coat on the surface of the parasite. The trypanosome evades the immune response of the host by expressing a series of antigenically distinct VSGs from an estimated 1000 VSG genes. This Trypanosoma brucei brucei protein is Variant surface glycoprotein ILTAT 1.23.